We begin with the raw amino-acid sequence, 210 residues long: FMN-dependent NADH:quinone oxidoreductase (210 aa).

Residues 17-19 (SCS) and 148-151 (SSGG) contribute to the FMN site.

This sequence belongs to the azoreductase type 1 family. As to quaternary structure, homodimer. Requires FMN as cofactor.

The enzyme catalyses 2 a quinone + NADH + H(+) = 2 a 1,4-benzosemiquinone + NAD(+). It carries out the reaction N,N-dimethyl-1,4-phenylenediamine + anthranilate + 2 NAD(+) = 2-(4-dimethylaminophenyl)diazenylbenzoate + 2 NADH + 2 H(+). Functionally, quinone reductase that provides resistance to thiol-specific stress caused by electrophilic quinones. In terms of biological role, also exhibits azoreductase activity. Catalyzes the reductive cleavage of the azo bond in aromatic azo compounds to the corresponding amines. This Geotalea uraniireducens (strain Rf4) (Geobacter uraniireducens) protein is FMN-dependent NADH:quinone oxidoreductase.